The chain runs to 354 residues: uncharacterized protein (354 aa).

This is an uncharacterized protein from Rickettsia prowazekii (strain Madrid E).